A 586-amino-acid polypeptide reads, in one-letter code: A-type ATP synthase subunit A (586 aa).

232–239 is a binding site for ATP; it reads GPFGSGKT.

It belongs to the ATPase alpha/beta chains family. Has multiple subunits with at least A(3), B(3), C, D, E, F, H, I and proteolipid K(x).

Its subcellular location is the cell membrane. The enzyme catalyses ATP + H2O + 4 H(+)(in) = ADP + phosphate + 5 H(+)(out). Its function is as follows. Component of the A-type ATP synthase that produces ATP from ADP in the presence of a proton gradient across the membrane. The A chain is the catalytic subunit. The chain is A-type ATP synthase subunit A from Methanococcus vannielii (strain ATCC 35089 / DSM 1224 / JCM 13029 / OCM 148 / SB).